We begin with the raw amino-acid sequence, 546 residues long: Oncoprotein-induced transcript 3 protein (546 aa).

Positions 1–16 (MPLSLLLACLFTTVTL) are cleaved as a signal peptide. N-linked (GlcNAc...) asparagine glycosylation is found at N89 and N116. The 41-residue stretch at 182–222 (DENECEHNNGGCSEICVNLKNSHRCACGVGRVLRSDGKTCE) folds into the EGF-like; calcium-binding domain. 3 disulfide bridges follow: C186/C197, C193/C206, and C208/C221. Residues 261–516 (TCQVPVLCKS…SRCAQGCHRR (256 aa)) form the ZP domain. N-linked (GlcNAc...) asparagine glycosylation occurs at N299. A disordered region spans residues 524–546 (DEDSAGLQSQTLTGGPISIDWEE).

The protein localises to the nucleus envelope. In terms of biological role, may be involved in hepatocellular function and development. The protein is Oncoprotein-induced transcript 3 protein (Oit3) of Rattus norvegicus (Rat).